Here is a 533-residue protein sequence, read N- to C-terminus: Beta-1,4-mannosyl-glycoprotein 4-beta-N-acetylglucosaminyltransferase (533 aa).

Over 1 to 7 the chain is Cytoplasmic; it reads MKMRRYK. A helical; Signal-anchor for type II membrane protein transmembrane segment spans residues 8-23; it reads LFLMFCMAGLCLISFL. Residues 24-533 lie on the Lumenal side of the membrane; it reads HFFKTLSYVT…ARGKLDEAEV (510 aa). The disordered stretch occupies residues 119-158; that stretch reads KPGTKMLERPPPGRPEEKPEGANGSSARRPPRYLLSARER. Asn141, Asn241, Asn259, and Asn397 each carry an N-linked (GlcNAc...) asparagine glycan. A disordered region spans residues 507-533; that stretch reads STAAGGWRHRGPEGRPPARGKLDEAEV.

The protein belongs to the glycosyltransferase 17 family. Interacts with MGAT4D.

It is found in the golgi apparatus membrane. The enzyme catalyses N(4)-{beta-D-GlcNAc-(1-&gt;2)-alpha-D-Man-(1-&gt;3)-[beta-D-GlcNAc-(1-&gt;2)-alpha-D-Man-(1-&gt;6)]-beta-D-Man-(1-&gt;4)-beta-D-GlcNAc-(1-&gt;4)-beta-D-GlcNAc}-L-asparaginyl-[protein] + UDP-N-acetyl-alpha-D-glucosamine = N(4)-{beta-D-GlcNAc-(1-&gt;2)-alpha-D-Man-(1-&gt;3)-[beta-D-GlcNAc-(1-&gt;4)]-[beta-D-GlcNAc-(1-&gt;2)-alpha-D-Man-(1-&gt;6)]-beta-D-Man-(1-&gt;4)-beta-D-GlcNAc-(1-&gt;4)-beta-D-GlcNAc}-L-asparaginyl-[protein] + UDP + H(+). Its pathway is protein modification; protein glycosylation. Functionally, it is involved in the regulation of the biosynthesis and biological function of glycoprotein oligosaccharides. Catalyzes the addition of N-acetylglucosamine in beta 1-4 linkage to the beta-linked mannose of the trimannosyl core of N-linked sugar chains, called bisecting N-acetylglucosamine (GlcNAc). It is one of the most important enzymes involved in the regulation of the biosynthesis of glycoprotein oligosaccharides. The addition of this bisecting GlcNAc residue alters not only the composition, but also the conformation of the N-glycan. The introduction of the bisecting GlcNAc residue results in the suppression of further processing and elongation of N-glycans, precluding the formation of beta-1,6 GlcNAc branching, catalyzed by MGAT5 since it is unable to use the bisected oligosaccharide as a substrate. Addition of bisecting N-acetylglucosamine to CDH1/E-cadherin modulates CDH1 cell membrane location. Inhibits NeuAc-alpha-2,3-Gal-beta-1,4-GlcNAc- formation which modulates sialylation levels and plays a role in cell migration regulation. In brain, addition of bisecting N-acetylglucosamine to BACE1 blocks its lysosomal targeting in response to oxidative stress and further degradation which increases its location to early endosome and the APP cleavage. This chain is Beta-1,4-mannosyl-glycoprotein 4-beta-N-acetylglucosaminyltransferase, found in Homo sapiens (Human).